The chain runs to 311 residues: Methionyl-tRNA formyltransferase (311 aa).

A (6S)-5,6,7,8-tetrahydrofolate-binding site is contributed by 110 to 113; sequence SLLP.

It belongs to the Fmt family.

It catalyses the reaction L-methionyl-tRNA(fMet) + (6R)-10-formyltetrahydrofolate = N-formyl-L-methionyl-tRNA(fMet) + (6S)-5,6,7,8-tetrahydrofolate + H(+). Attaches a formyl group to the free amino group of methionyl-tRNA(fMet). The formyl group appears to play a dual role in the initiator identity of N-formylmethionyl-tRNA by promoting its recognition by IF2 and preventing the misappropriation of this tRNA by the elongation apparatus. This is Methionyl-tRNA formyltransferase from Streptococcus pyogenes serotype M1.